A 164-amino-acid polypeptide reads, in one-letter code: Envelope glycoprotein L (164 aa).

The N-terminal stretch at 1-24 (MRSLDRYAIFILLACGLLWRPCLS) is a signal peptide.

This sequence belongs to the herpesviridae glycoprotein L family. Interacts with glycoprotein H (gH); this interaction is necessary for the correct processing and cell surface expression of gH. The heterodimer gH/gL seems to interact with gB trimers during fusion.

The protein localises to the virion membrane. It localises to the host cell membrane. The protein resides in the host Golgi apparatus. Its subcellular location is the host trans-Golgi network. Its function is as follows. The heterodimer glycoprotein H-glycoprotein L is required for the fusion of viral and plasma membranes leading to virus entry into the host cell. Acts as a functional inhibitor of gH and maintains gH in an inhibited form. Upon binding to host integrins, gL dissociates from gH leading to activation of the viral fusion glycoproteins gB and gH. This chain is Envelope glycoprotein L, found in Equine herpesvirus 2 (strain 86/87) (EHV-2).